The sequence spans 83 residues: uncharacterized protein (83 aa).

Residues 58-83 (EHGHDDEYDEFSDPNAWVPRRSRDTG) are disordered.

This is an uncharacterized protein from Mycobacterium tuberculosis (strain CDC 1551 / Oshkosh).